The sequence spans 339 residues: Phytoene synthase (339 aa).

It belongs to the phytoene/squalene synthase family. The cofactor is ATP. It depends on Mn(2+) as a cofactor. Mg(2+) is required as a cofactor.

Its pathway is carotenoid biosynthesis; phytoene biosynthesis. In terms of biological role, involved in the biosynthesis of carotenoids. Catalyzes the condensation of two molecules of geranylgeranyl diphosphate (GGPP) to give prephytoene diphosphate (PPPP) and the subsequent rearrangement of the cyclopropylcarbinyl intermediate to yield phytoene. The protein is Phytoene synthase (crtB) of Rhodobacter capsulatus (strain ATCC BAA-309 / NBRC 16581 / SB1003).